Consider the following 95-residue polypeptide: Toxin Tbo-IT2 (95 aa).

The first 23 residues, 1-23 (MTMKTLCLSLIVIGVLILVAVKA), serve as a signal peptide directing secretion. The propeptide occupies 24–53 (EDYVNINSLEEAPEENVNINNLEETPEESR). Disulfide bonds link C54–C68, C61–C73, C67–C84, C70–C92, and C75–C82. Position 92 is a cysteine amide (C92).

This sequence belongs to the neurotoxin 02 (plectoxin) family. 02 (plectoxin) subfamily. Expressed by the venom gland.

It is found in the secreted. This recombinant (non-amidated) toxin shows insecticidal activity on larvae of the housefly Musca domestica and has no activity on a panel of expressed neuronal receptors and ion channels. This Tibellus oblongus (Oblong running crab spider) protein is Toxin Tbo-IT2.